The sequence spans 234 residues: MTNQLIYKGKAKDIYSTKDENVIRTVYKDQATMLNGARKETIDGKGALNNQISSLIFEKLNKAGVVTHYIEQISKNEQLNKKVDIIPLEVVLRNVTAGSFSKRFGVEEGHVLETPIVEFYYKNDDLDDPFINDEHVKFLGIVNDEEIAYLKGETRRINELLKGWFAQIGLNLIDFKLEFGFDQEGTIILADEFSPDNCRLWDKNGNHMDKDVFRRDLGNLTDVYQVVLEKLIAL.

The protein belongs to the SAICAR synthetase family.

It catalyses the reaction 5-amino-1-(5-phospho-D-ribosyl)imidazole-4-carboxylate + L-aspartate + ATP = (2S)-2-[5-amino-1-(5-phospho-beta-D-ribosyl)imidazole-4-carboxamido]succinate + ADP + phosphate + 2 H(+). The protein operates within purine metabolism; IMP biosynthesis via de novo pathway; 5-amino-1-(5-phospho-D-ribosyl)imidazole-4-carboxamide from 5-amino-1-(5-phospho-D-ribosyl)imidazole-4-carboxylate: step 1/2. The polypeptide is Phosphoribosylaminoimidazole-succinocarboxamide synthase (Streptococcus pyogenes serotype M1).